Reading from the N-terminus, the 341-residue chain is Putative casein kinase I C03C10.2 (341 aa).

The 277-residue stretch at Trp-50–Leu-326 folds into the Protein kinase domain. ATP contacts are provided by residues Ile-56–Ile-64 and Lys-79. Catalysis depends on Asp-173, which acts as the Proton acceptor.

The protein belongs to the protein kinase superfamily. CK1 Ser/Thr protein kinase family. Casein kinase I subfamily.

It catalyses the reaction L-seryl-[protein] + ATP = O-phospho-L-seryl-[protein] + ADP + H(+). It carries out the reaction L-threonyl-[protein] + ATP = O-phospho-L-threonyl-[protein] + ADP + H(+). This is Putative casein kinase I C03C10.2 from Caenorhabditis elegans.